The following is a 243-amino-acid chain: Transcription factor TCP6 (243 aa).

A disordered region spans residues 1–55; sequence MVMEPKKNQNLPSFLNPSRQNQDNDKKRKQTEVKGFDIVVGEKRKKKENEEEDQE. Positions 8 to 21 are enriched in polar residues; sequence NQNLPSFLNPSRQN. Over residues 22–35 the composition is skewed to basic and acidic residues; the sequence is QDNDKKRKQTEVKG. Residues 42 to 66 adopt a coiled-coil conformation; the sequence is EKRKKKENEEEDQEIQILYEKEKKK. Residues 68–122 form the TCP domain; sequence NKDRHLKVEGRGRRVRLPPLCAARIYQLTKELGHKSDGETLEWLLQHAEPSILSA.

As to quaternary structure, interacts with SPL.

The protein localises to the nucleus. This chain is Transcription factor TCP6 (TCP6), found in Arabidopsis thaliana (Mouse-ear cress).